Here is a 366-residue protein sequence, read N- to C-terminus: Protein BIG GRAIN 1-like B (366 aa).

Disordered stretches follow at residues 42 to 73 (DSST…DFNR) and 129 to 148 (FERS…EHGS). Residues 56–73 (QNREDTRVSANRRDDFNR) show a composition bias toward basic and acidic residues.

Belongs to the BIG GRAIN 1 (BG1) plant protein family.

The protein localises to the cell membrane. Involved in auxin transport. Regulator of the auxin signaling pathway. The sequence is that of Protein BIG GRAIN 1-like B from Arabidopsis thaliana (Mouse-ear cress).